The primary structure comprises 418 residues: MHPRRPEGFDGLGYRGGVRDDPAFGGPFHARSFGSGTELGHWVTTPPDIPGSRNLHWGEKSPSYGVPSAPPTLEGSAEEPFPGGGEGPRPGPSSEQLNRFAGFGIGLASLFTENVLAHPCIVLRRQCQVNYHARHYHLTPFSIINIMYSFNKTQGPRALWKGMGSTFIVQGVTLGAEGIISEFTPLPREVSHKLNPKQIGEHLLLKCLTYMVAMPFYSASLIETVQSEIIRDNTGILECVKEGIGRVIGLGVPHSKRLLPLFSLIFPTVLHGVLHYIISSIIQKIVLLILKRKTYNSHLAESTSPMQNMLDAYFPELIANFAASLCSDVILYPLETVLHRLHIQGTRTIIDNTDLGYEVLPINTQYEGMRDCINTIKQEEGVFGFYKGFGAVIIQYTLHATILQITKMIYSTLLQNSI.

2 positions are modified to phosphoserine: Ser32 and Ser35. Thr45 is subject to Phosphothreonine. The tract at residues 46 to 96 (PPDIPGSRNLHWGEKSPSYGVPSAPPTLEGSAEEPFPGGGEGPRPGPSSEQ) is disordered. The stretch at 96–187 (QLNRFAGFGI…GIISEFTPLP (92 aa)) is one Solcar 1 repeat. The next 6 membrane-spanning stretches (helical) occupy residues 103–123 (FGIG…CIVL), 167–187 (FIVQ…TPLP), 202–222 (HLLL…ASLI), 258–278 (LLPL…HYII), 314–334 (FPEL…LYPL), and 382–402 (VFGF…HATI). One copy of the Solcar 2 repeat lies at 311-413 (DAYFPELIAN…QITKMIYSTL (103 aa)).

It belongs to the mitochondrial carrier (TC 2.A.29) family. Associates with the mitochondrial contact site and cristae organizing system (MICOS) complex. May associate with the endoplasmic reticulum membrane protein complex (EMC).

The protein localises to the mitochondrion outer membrane. Its function is as follows. Transmembrane protein of the mitochondrial outer membrane that controls mitochondrial organization. May regulate the assembly of the MICOS (mitochondrial contact site and cristae organizing system) complex which is essential to the biogenesis and dynamics of mitochondrial cristae, the inwards folds of the inner mitochondrial membrane. Through its interaction with the EMC (endoplasmic reticulum membrane protein complex), could regulate mitochondrial lipid homeostasis and thereby mitochondrial fission. This is Mitochondrial outer membrane protein SLC25A46 from Mus musculus (Mouse).